We begin with the raw amino-acid sequence, 425 residues long: MASKEMFEDTVEERVINEEYKIWKKNTPFLYDLVMTHALQWPSLTVQWLPEVTKPEGKDYALHWLVLGTHTSDEQNHLVVARVHIPNDDAQFDASHCDSDKGEFGGFGSVTGKIECEIKINHEGEVNRARYMPQNPHIIATKTPSSDVLVFDYTKHPAKPDPSGECNPDLRLRGHQKEGYGLSWNSNLSGHLLSASDDHTVCLWDINAGPKEGKIVDAKAIFTGHSAVVEDVAWHLLHESLFGSVADDQKLMIWDTRSNTTSKPSHLVDAHTAEVNCLSFNPYSEFILATGSADKTVALWDLRNLKLKLHTFESHKDEIFQVHWSPHNETILASSGTDRRLNVWDLSKIGEEQSAEDAEDGPPELLFIHGGHTAKISDFSWNPNEPWVICSVSEDNIMQIWQMAENIYNDEESDVTTSELEGQGS.

The residue at position 2 (Ala2) is an N-acetylalanine. Phosphoserine is present on Ser3. Lys4 carries the N6-acetyllysine; alternate modification. A Glycyl lysine isopeptide (Lys-Gly) (interchain with G-Cter in SUMO2); alternate cross-link involves residue Lys4. Lys4 participates in a covalent cross-link: Glycyl lysine isopeptide (Lys-Gly) (interchain with G-Cter in ubiquitin); alternate. The residue at position 10 (Thr10) is a Phosphothreonine. Phosphoserine is present on residues Glu13 and Ser95. 7 WD repeats span residues 47–122, 128–173, 181–217, 228–269, 275–312, 318–369, and 376–403; these read QWLP…KINH, RARY…LRLR, GLSW…KIVD, VVED…HLVD, VNCL…LHTF, EIFQ…LFIH, and ISDF…IWQM. Lys101 participates in a covalent cross-link: Glycyl lysine isopeptide (Lys-Gly) (interchain with G-Cter in SUMO2). At Lys119 the chain carries N6-acetyllysine. Lys155 is covalently cross-linked (Glycyl lysine isopeptide (Lys-Gly) (interchain with G-Cter in SUMO2)). Lys159 carries the post-translational modification N6-acetyllysine; alternate. Lys159 is covalently cross-linked (Glycyl lysine isopeptide (Lys-Gly) (interchain with G-Cter in SUMO2); alternate). Ser354 is modified (phosphoserine).

It belongs to the WD repeat RBAP46/RBAP48/MSI1 family. In terms of assembly, binds directly to helix 1 of the histone fold of histone H4, a region that is not accessible when H4 is in chromatin. Subunit of the type B histone acetyltransferase (HAT) complex, composed of RBBP7 and HAT1. Subunit of the core histone deacetylase (HDAC) complex, which is composed of HDAC1, HDAC2, RBBP4 and RBBP7. The core HDAC complex associates with SIN3A, ARID4B/SAP180, SAP18, SAP30, SAP130, SUDS3/SAP45 and possibly ARID4A/RBP1 and ING1 to form the SIN3 HDAC complex. Component of the nucleosome remodeling and deacetylase (NuRD) repressor complex, composed of core proteins MTA1, MTA2, MTA3, RBBP4, RBBP7, HDAC1, HDAC2, MBD2, MBD3, and peripherally associated proteins CDK2AP1, CDK2AP2, GATAD2A, GATAD2B, CHD3, CHD4 and CHD5. The exact stoichiometry of the NuRD complex is unknown, and some subunits such as MBD2 and MBD3, GATAD2A and GATAD2B, and CHD3, CHD4 and CHD5 define mutually exclusive NuRD complexes. The NuRD complex may interact with MBD3L1. The NuRD complex may interact with MBD3L2. Subunit of the PRC2/EED-EZH2 complex, which is composed of at least EED, EZH2, RBBP4, RBBP7 and SUZ12. The PRC2/EED-EZH2 complex may also associate with HDAC1. Component of the NURF-1 ISWI chromatin remodeling complex (also called the nucleosome-remodeling factor (NURF) complex) at least composed of SMARCA1 (isoform 2), BPTF, RBBP4 and RBBP7. Within the complex interacts with isoform 2 of SMARCA1. Component of the BPFT-SMARCA1 complex at least composed of SMARCA1 (isoform 1), BPFT, RBBP4 and RBBP7; the complex is catalytically inactive and does not remodel chromatin. Within the complex interacts with isoform 1 of SMARCA1. Interacts with BRCA1. Interacts with CDK2AP1. Interacts with CENPA. Interacts with CHD3. Interacts with CHD4. Interacts with CREBBP, and this interaction may be enhanced by the binding of phosphorylated CREB1 to CREBBP. Interacts with HDAC7. Interacts with MTA1. Interacts with PWWP2B. Interacts with RB1 (via viral protein-binding domain). Interacts with SUV39H1.

It localises to the nucleus. Core histone-binding subunit that may target chromatin remodeling factors, histone acetyltransferases and histone deacetylases to their histone substrates in a manner that is regulated by nucleosomal DNA. Component of several complexes which regulate chromatin metabolism. These include the type B histone acetyltransferase (HAT) complex, which is required for chromatin assembly following DNA replication; the core histone deacetylase (HDAC) complex, which promotes histone deacetylation and consequent transcriptional repression; the nucleosome remodeling and histone deacetylase complex (the NuRD complex), which promotes transcriptional repression by histone deacetylation and nucleosome remodeling; and the PRC2/EED-EZH2 complex, which promotes repression of homeotic genes during development; and the NURF (nucleosome remodeling factor) complex. The polypeptide is Histone-binding protein RBBP7 (RBBP7) (Homo sapiens (Human)).